The sequence spans 180 residues: Small ribosomal subunit protein uS4 (180 aa).

Residues arginine 103–alanine 174 enclose the S4 RNA-binding domain.

It belongs to the universal ribosomal protein uS4 family. In terms of assembly, part of the 30S ribosomal subunit. Contacts protein S5. The interaction surface between S4 and S5 is involved in control of translational fidelity.

Its function is as follows. One of the primary rRNA binding proteins, it binds directly to 16S rRNA where it nucleates assembly of the body of the 30S subunit. In terms of biological role, with S5 and S12 plays an important role in translational accuracy. The sequence is that of Small ribosomal subunit protein uS4 from Pyrococcus horikoshii (strain ATCC 700860 / DSM 12428 / JCM 9974 / NBRC 100139 / OT-3).